Here is an 89-residue protein sequence, read N- to C-terminus: Small ribosomal subunit protein uS15 (89 aa).

The protein belongs to the universal ribosomal protein uS15 family. In terms of assembly, part of the 30S ribosomal subunit. Forms a bridge to the 50S subunit in the 70S ribosome, contacting the 23S rRNA.

One of the primary rRNA binding proteins, it binds directly to 16S rRNA where it helps nucleate assembly of the platform of the 30S subunit by binding and bridging several RNA helices of the 16S rRNA. In terms of biological role, forms an intersubunit bridge (bridge B4) with the 23S rRNA of the 50S subunit in the ribosome. The protein is Small ribosomal subunit protein uS15 of Acinetobacter baylyi (strain ATCC 33305 / BD413 / ADP1).